The primary structure comprises 395 residues: Multidrug resistance protein MdtL (395 aa).

The Cytoplasmic portion of the chain corresponds to 1-3 (MKR). A helical transmembrane segment spans residues 4-24 (FLLCSFALVLLYPAGIDMYLV). Residues 25–41 (GLPRIAADLNASEAQLH) lie on the Periplasmic side of the membrane. Residues 42–62 (IAFSVYLAGMATAMLFAGKIA) form a helical membrane-spanning segment. At 63 to 68 (DQSGRK) the chain is on the cytoplasmic side. A helical transmembrane segment spans residues 69–89 (PVAIVGAIVFMMASLLCSRAS). Over 90–92 (EGS) the chain is Periplasmic. The chain crosses the membrane as a helical span at residues 93–113 (LFLSGRFLQGVGAGGCYVVAF). At 114-130 (AILRDTLDEHRRAKVLS) the chain is on the cytoplasmic side. A helical membrane pass occupies residues 131–151 (LLNGITCIVPVLAPVMGHLIM). At 152–157 (LRFPWQ) the chain is on the periplasmic side. The chain crosses the membrane as a helical span at residues 158–178 (SLFYTMSTMGIMVGLLSLFIL). The Cytoplasmic segment spans residues 179–216 (RETRPARLAPRDLSPSSSAAESLVNRFFVSRLAITTLS). Residues 217 to 237 (VSVILTFVNASPVLLMEVMGF) form a helical membrane-spanning segment. The Periplasmic segment spans residues 238-246 (SRGDYAITM). The helical transmembrane segment at 247 to 267 (ALTAGVSMVVSFSTPFALGLF) threads the bilayer. Residues 268–270 (KPR) are Cytoplasmic-facing. A helical membrane pass occupies residues 271 to 291 (TLMLVSQGLFLTAGVTLSLAH). Residues 292-294 (TNT) are Periplasmic-facing. Residues 295-315 (VTLFGLTLICAGFSVGFGVAM) form a helical membrane-spanning segment. Topologically, residues 316–332 (SQALGPFSLRAGVASST) are cytoplasmic. A helical membrane pass occupies residues 333-353 (LGIAQVCGSSLWIWLAAILGI). At 354–357 (SAMN) the chain is on the periplasmic side. The chain crosses the membrane as a helical span at residues 358 to 378 (MLIGILIGCSIVSILLIFSVA). Topologically, residues 379–395 (PNRSVAEHEEIPYQSRS) are cytoplasmic.

It belongs to the major facilitator superfamily. DHA1 family. MdtL (TC 2.A.1.2.22) subfamily.

The protein resides in the cell inner membrane. In Salmonella typhi, this protein is Multidrug resistance protein MdtL (mdtL).